Consider the following 188-residue polypeptide: Peptidyl-tRNA hydrolase (188 aa).

F15 serves as a coordination point for tRNA. Residue H20 is the Proton acceptor of the active site. 3 residues coordinate tRNA: Y64, N66, and N112.

Belongs to the PTH family. Monomer.

Its subcellular location is the cytoplasm. It catalyses the reaction an N-acyl-L-alpha-aminoacyl-tRNA + H2O = an N-acyl-L-amino acid + a tRNA + H(+). In terms of biological role, hydrolyzes ribosome-free peptidyl-tRNAs (with 1 or more amino acids incorporated), which drop off the ribosome during protein synthesis, or as a result of ribosome stalling. Its function is as follows. Catalyzes the release of premature peptidyl moieties from peptidyl-tRNA molecules trapped in stalled 50S ribosomal subunits, and thus maintains levels of free tRNAs and 50S ribosomes. This Borreliella afzelii (strain PKo) (Borrelia afzelii) protein is Peptidyl-tRNA hydrolase.